We begin with the raw amino-acid sequence, 468 residues long: uncharacterized protein (468 aa).

Positions 1 to 19 (MRVLSVLLVALTVAGSAYS) are cleaved as a signal peptide. N-linked (GlcNAc...) asparagine glycans are attached at residues Asn86 and Asn334. A disordered region spans residues 401-421 (NPSTNLPETSPPTEQPTAPPA). Pro residues predominate over residues 409 to 421 (TSPPTEQPTAPPA). Asn435 carries N-linked (GlcNAc...) asparagine glycosylation. Asn444 is lipidated: GPI-like-anchor amidated asparagine. Positions 445-468 (SASSIEMSKLVVAILSLFILAFFH) are cleaved as a propeptide — removed in mature form.

It localises to the cell membrane. This is an uncharacterized protein from Dictyostelium discoideum (Social amoeba).